The following is a 122-amino-acid chain: Large ribosomal subunit protein uL14 (122 aa).

This sequence belongs to the universal ribosomal protein uL14 family. In terms of assembly, part of the 50S ribosomal subunit. Forms a cluster with proteins L3 and L19. In the 70S ribosome, L14 and L19 interact and together make contacts with the 16S rRNA in bridges B5 and B8.

In terms of biological role, binds to 23S rRNA. Forms part of two intersubunit bridges in the 70S ribosome. This chain is Large ribosomal subunit protein uL14, found in Herminiimonas arsenicoxydans.